The primary structure comprises 131 residues: Small ribosomal subunit protein uS8 (131 aa).

This sequence belongs to the universal ribosomal protein uS8 family. Part of the 30S ribosomal subunit. Contacts proteins S5 and S12.

One of the primary rRNA binding proteins, it binds directly to 16S rRNA central domain where it helps coordinate assembly of the platform of the 30S subunit. The chain is Small ribosomal subunit protein uS8 from Chlorobium phaeovibrioides (strain DSM 265 / 1930) (Prosthecochloris vibrioformis (strain DSM 265)).